We begin with the raw amino-acid sequence, 101 residues long: Small ribosomal subunit protein bS18c (101 aa).

The span at 1-19 (MDKSKRPFRKSKRSFRRRL) shows a compositional bias: basic residues. The interval 1–23 (MDKSKRPFRKSKRSFRRRLPPIG) is disordered.

This sequence belongs to the bacterial ribosomal protein bS18 family. As to quaternary structure, part of the 30S ribosomal subunit.

Its subcellular location is the plastid. It is found in the chloroplast. The chain is Small ribosomal subunit protein bS18c from Ceratophyllum demersum (Rigid hornwort).